Reading from the N-terminus, the 156-residue chain is Small ribosomal subunit protein uS7 (156 aa).

This sequence belongs to the universal ribosomal protein uS7 family. Part of the 30S ribosomal subunit. Contacts proteins S9 and S11.

Its function is as follows. One of the primary rRNA binding proteins, it binds directly to 16S rRNA where it nucleates assembly of the head domain of the 30S subunit. Is located at the subunit interface close to the decoding center, probably blocks exit of the E-site tRNA. The polypeptide is Small ribosomal subunit protein uS7 (Micrococcus luteus (strain ATCC 4698 / DSM 20030 / JCM 1464 / CCM 169 / CCUG 5858 / IAM 1056 / NBRC 3333 / NCIMB 9278 / NCTC 2665 / VKM Ac-2230) (Micrococcus lysodeikticus)).